We begin with the raw amino-acid sequence, 1085 residues long: Solute carrier family 12 member 4 (1085 aa).

Over 1–119 the chain is Cytoplasmic; sequence MPHFTVVPVD…RRAAKAPSMG (119 aa). 5 positions are modified to phosphoserine: S24, S47, S51, S81, and S88. The interval 32–56 is disordered; it reads AEREDSDGQGNHRENSPFLSPLDAS. Residues 120-141 form a discontinuously helical membrane-spanning segment; sequence TLMGVYLPCLQNIFGVILFLRL. K(+) contacts are provided by N131 and I132. At 142 to 149 the chain is on the extracellular side; the sequence is TWMVGTAG. A helical membrane pass occupies residues 150–172; sequence VLQALLIVLICCCCTLLTAISMS. The Cytoplasmic portion of the chain corresponds to 173–196; it reads AIATNGVVPAGGSYFMISRSLGPE. Residues 197-225 form a helical membrane-spanning segment; sequence FGGAVGLCFYLGTTFAAAMYILGAIEILL. Y216 lines the K(+) pocket. Over 226–248 the chain is Extracellular; the sequence is TYIAPPAAIFYPSGTHDMSSATL. The next 2 membrane-spanning stretches (helical) occupy residues 249 to 271 and 272 to 297; these read NNMR…VGVK and YVNK…GGIK. At 298 to 419 the chain is on the extracellular side; the sequence is SAFDPPVFPV…LYVVADIATS (122 aa). A disulfide bond links C308 and C323. Residues N312, N331, and N347 are each glycosylated (N-linked (GlcNAc...) asparagine). The cysteines at positions 343 and 353 are disulfide-linked. The helical transmembrane segment at 420–440 threads the bilayer; that stretch reads FTVLVGIFFPSVTGIMAGSNR. 2 residues coordinate K(+): P429 and T432. The chloride site is built by G433, I434, and M435. The Cytoplasmic segment spans residues 441 to 450; the sequence is SGDLRDAQKS. Residues 451-473 form a helical membrane-spanning segment; it reads IPVGTILAIVTTSLVYFSSVILF. The Extracellular portion of the chain corresponds to 474-504; that stretch reads GACIEGVVLRDKYGDGVSRNLVVGTLAWPSP. The chain crosses the membrane as a helical span at residues 505-531; that stretch reads WVIVVGSFFSTCGAGLQSLTGAPRLLQ. At 532 to 554 the chain is on the cytoplasmic side; sequence AIAKDNIIPFLRVFGHGKANGEP. The next 2 helical transmembrane spans lie at 555 to 575 and 576 to 598; these read TWAL…ASLD and MVAP…ACAV. Chloride is bound at residue Y589. Topologically, residues 599 to 612 are cytoplasmic; that stretch reads QTLLRTPNWRPRFK. 2 helical membrane passes run 613–635 and 636–651; these read YYHW…VSSW and YYAL…IYKY. Residues 652 to 1085 are Cytoplasmic-facing; sequence IEYQGAEKEW…GGREVITIYS (434 aa). Residues 665–681 form a scissor helix region; that stretch reads IRGLSLSAARYALLRLE. ATP contacts are provided by L697, K699, K707, Y708, and V730. Residue S734 is modified to Phosphoserine. Positions 794, 795, and 797 each coordinate ATP. S916 and S967 each carry phosphoserine. At T983 the chain carries Phosphothreonine. S1050 is subject to Phosphoserine.

The protein belongs to the SLC12A transporter family. K/Cl co-transporter subfamily. Homodimer; adopts a domain-swap conformation at the scissor helices connecting the transmembrane domain and C-terminal domain. Heterodimer with other K-Cl cotransporters. N-glycosylated. In terms of processing, phosphorylated, phosphorylation may regulate transporter activity. As to expression, ubiquitous.

The protein resides in the cell membrane. It carries out the reaction K(+)(in) + chloride(in) = K(+)(out) + chloride(out). With respect to regulation, inhibited by WNK3. Functionally, mediates electroneutral potassium-chloride cotransport when activated by cell swelling. May contribute to cell volume homeostasis in single cells. May be involved in the regulation of basolateral Cl(-) exit in NaCl absorbing epithelia. This chain is Solute carrier family 12 member 4 (Slc12a4), found in Rattus norvegicus (Rat).